A 238-amino-acid chain; its full sequence is uncharacterized protein (238 aa).

This is an uncharacterized protein from Escherichia coli (strain K12).